The chain runs to 1049 residues: Presequence protease, mitochondrial (1049 aa).

A mitochondrion-targeting transit peptide spans 1–39; it reads MLRSYLHLGRHRTPAFRQPLGRLLRPTASILQYAQSRTL. His113 provides a ligand contact to Zn(2+). Glu116 functions as the Proton acceptor in the catalytic mechanism. A Zn(2+)-binding site is contributed by His117. Glu189 is an active-site residue. Residue Glu222 participates in Zn(2+) binding.

This sequence belongs to the peptidase M16 family. PreP subfamily. As to quaternary structure, monomer and homodimer; homodimerization is induced by binding of the substrate. Zn(2+) serves as cofactor.

It localises to the mitochondrion intermembrane space. The protein resides in the mitochondrion matrix. Its function is as follows. Degrades mitochondrial transit peptides after their cleavage in the intermembrane space or in the matrix, and presequence peptides; clearance of these peptides is required to keep the presequence processing machinery running. Preferentially cleaves the N-terminal side of paired basic amino acid residues. Also degrades other unstructured peptides. May function as an ATP-dependent peptidase as opposed to a metalloendopeptidase. The polypeptide is Presequence protease, mitochondrial (cym1) (Emericella nidulans (strain FGSC A4 / ATCC 38163 / CBS 112.46 / NRRL 194 / M139) (Aspergillus nidulans)).